Here is a 147-residue protein sequence, read N- to C-terminus: Large ribosomal subunit protein uL11 (147 aa).

It belongs to the universal ribosomal protein uL11 family. As to quaternary structure, part of the ribosomal stalk of the 50S ribosomal subunit. Interacts with L10 and the large rRNA to form the base of the stalk. L10 forms an elongated spine to which L12 dimers bind in a sequential fashion forming a multimeric L10(L12)X complex. In terms of processing, one or more lysine residues are methylated.

Functionally, forms part of the ribosomal stalk which helps the ribosome interact with GTP-bound translation factors. The chain is Large ribosomal subunit protein uL11 from Cytophaga hutchinsonii (strain ATCC 33406 / DSM 1761 / CIP 103989 / NBRC 15051 / NCIMB 9469 / D465).